A 197-amino-acid chain; its full sequence is Elongation factor Ts (197 aa).

An involved in Mg(2+) ion dislocation from EF-Tu region spans residues 81-84 (TDFV).

It belongs to the EF-Ts family.

It is found in the cytoplasm. In terms of biological role, associates with the EF-Tu.GDP complex and induces the exchange of GDP to GTP. It remains bound to the aminoacyl-tRNA.EF-Tu.GTP complex up to the GTP hydrolysis stage on the ribosome. This chain is Elongation factor Ts, found in Petrotoga mobilis (strain DSM 10674 / SJ95).